The chain runs to 450 residues: Tubulin beta-6 chain (450 aa).

Residues Q11, E71, S140, G144, T145, G146, N206, and N228 each coordinate GTP. Mg(2+) is bound at residue E71. A disordered region spans residues 429-450 (DATVEDEEEYEGEEGLDENYET). Acidic residues predominate over residues 431–450 (TVEDEEEYEGEEGLDENYET).

This sequence belongs to the tubulin family. Dimer of alpha and beta chains. A typical microtubule is a hollow water-filled tube with an outer diameter of 25 nm and an inner diameter of 15 nM. Alpha-beta heterodimers associate head-to-tail to form protofilaments running lengthwise along the microtubule wall with the beta-tubulin subunit facing the microtubule plus end conferring a structural polarity. Microtubules usually have 13 protofilaments but different protofilament numbers can be found in some organisms and specialized cells. Mg(2+) serves as cofactor.

Its subcellular location is the cytoplasm. It is found in the cytoskeleton. Functionally, tubulin is the major constituent of microtubules, a cylinder consisting of laterally associated linear protofilaments composed of alpha- and beta-tubulin heterodimers. Microtubules grow by the addition of GTP-tubulin dimers to the microtubule end, where a stabilizing cap forms. Below the cap, tubulin dimers are in GDP-bound state, owing to GTPase activity of alpha-tubulin. The polypeptide is Tubulin beta-6 chain (Gossypium hirsutum (Upland cotton)).